We begin with the raw amino-acid sequence, 284 residues long: tRNA uridine(34) hydroxylase (284 aa).

The Rhodanese domain maps to 132-226; it reads TGRPVVMLDT…YFEEVGGAHY (95 aa). The active-site Cysteine persulfide intermediate is C186.

This sequence belongs to the TrhO family.

It carries out the reaction uridine(34) in tRNA + AH2 + O2 = 5-hydroxyuridine(34) in tRNA + A + H2O. Its function is as follows. Catalyzes oxygen-dependent 5-hydroxyuridine (ho5U) modification at position 34 in tRNAs. This chain is tRNA uridine(34) hydroxylase, found in Burkholderia cenocepacia (strain ATCC BAA-245 / DSM 16553 / LMG 16656 / NCTC 13227 / J2315 / CF5610) (Burkholderia cepacia (strain J2315)).